A 246-amino-acid chain; its full sequence is Ribonuclease PH (246 aa).

Phosphate contacts are provided by residues Arg91 and 129–131; that span reads GTR.

It belongs to the RNase PH family. In terms of assembly, homohexameric ring arranged as a trimer of dimers.

The catalysed reaction is tRNA(n+1) + phosphate = tRNA(n) + a ribonucleoside 5'-diphosphate. Phosphorolytic 3'-5' exoribonuclease that plays an important role in tRNA 3'-end maturation. Removes nucleotide residues following the 3'-CCA terminus of tRNAs; can also add nucleotides to the ends of RNA molecules by using nucleoside diphosphates as substrates, but this may not be physiologically important. Probably plays a role in initiation of 16S rRNA degradation (leading to ribosome degradation) during starvation. This chain is Ribonuclease PH, found in Paraburkholderia phytofirmans (strain DSM 17436 / LMG 22146 / PsJN) (Burkholderia phytofirmans).